The chain runs to 179 residues: ECF RNA polymerase sigma factor SigF (179 aa).

The segment at 33–93 (RLRAYFMRRM…KLIDHWRRRK (61 aa)) is sigma-70 factor domain-2. Positions 51–64 (DLVQETLLAVHLKR) match the Polymerase core binding motif. Residues 123–170 (ALASLPQRQRMLVSDVKLTGLSLAEAGARAGISEGAAKVALHRALKAL) form a sigma-70 factor domain-4 region. A DNA-binding region (H-T-H motif) is located at residues 145 to 164 (LAEAGARAGISEGAAKVALH).

It belongs to the sigma-70 factor family. ECF subfamily.

Its subcellular location is the cytoplasm. Functionally, sigma factors are initiation factors that promote the attachment of RNA polymerase to specific initiation sites and are then released. Extracytoplasmic function (ECF) sigma factors are held in an inactive form by a cognate anti-sigma factor (NrsF in this case) until they are released. Up-regulates expression of 4 operons (sigF-nrsF, CCNA_02834, CCNA_03001 to CCNA_02999 and CCNA_03363 to CCNA_03366) in response to potassium dichromate (K(2)Cr(2)O(7)) or cadmium chloride (CdCl(2)). Overexpression of sigF leads to higher expression of its regulon. The sequence is that of ECF RNA polymerase sigma factor SigF from Caulobacter vibrioides (strain NA1000 / CB15N) (Caulobacter crescentus).